The chain runs to 172 residues: Putative metal-dependent hydrolase OB0782 (172 aa).

Zn(2+) contacts are provided by histidine 64, histidine 155, and histidine 159.

Belongs to the metal hydrolase YfiT family. In terms of assembly, homodimer. Zn(2+) is required as a cofactor.

The protein localises to the cytoplasm. Its function is as follows. Possible metal-dependent hydrolase. The sequence is that of Putative metal-dependent hydrolase OB0782 from Oceanobacillus iheyensis (strain DSM 14371 / CIP 107618 / JCM 11309 / KCTC 3954 / HTE831).